Here is a 262-residue protein sequence, read N- to C-terminus: Flap endonuclease Xni (262 aa).

Residue aspartate 105 participates in Mg(2+) binding. The 5'-3' exonuclease domain maps to 164-251 (SQFLDLMALA…NINLKDFRAN (88 aa)). 5 residues coordinate K(+): leucine 172, alanine 173, proline 181, isoleucine 183, and isoleucine 186. Positions 185-190 (GIGPKS) are interaction with DNA.

It belongs to the Xni family. Requires Mg(2+) as cofactor. The cofactor is K(+).

In terms of biological role, has flap endonuclease activity. During DNA replication, flap endonucleases cleave the 5'-overhanging flap structure that is generated by displacement synthesis when DNA polymerase encounters the 5'-end of a downstream Okazaki fragment. The chain is Flap endonuclease Xni from Shewanella putrefaciens (strain CN-32 / ATCC BAA-453).